A 593-amino-acid chain; its full sequence is Aspartate--tRNA ligase (593 aa).

Residue glutamate 173 participates in L-aspartate binding. Residues 197–200 (QLFK) are aspartate. Arginine 219 is a binding site for L-aspartate. Residues 219–221 (RDE) and glutamine 228 each bind ATP. Residue histidine 449 coordinates L-aspartate. Glutamate 483 contributes to the ATP binding site. Arginine 490 contributes to the L-aspartate binding site. Position 535–538 (535–538 (GLDR)) interacts with ATP.

This sequence belongs to the class-II aminoacyl-tRNA synthetase family. Type 1 subfamily. As to quaternary structure, homodimer.

Its subcellular location is the cytoplasm. It carries out the reaction tRNA(Asp) + L-aspartate + ATP = L-aspartyl-tRNA(Asp) + AMP + diphosphate. In terms of biological role, catalyzes the attachment of L-aspartate to tRNA(Asp) in a two-step reaction: L-aspartate is first activated by ATP to form Asp-AMP and then transferred to the acceptor end of tRNA(Asp). The protein is Aspartate--tRNA ligase of Shewanella piezotolerans (strain WP3 / JCM 13877).